Here is a 375-residue protein sequence, read N- to C-terminus: DNA replication and repair protein RecF (375 aa).

Position 30–37 (30–37) interacts with ATP; sequence GENAQGKT.

This sequence belongs to the RecF family.

It is found in the cytoplasm. Functionally, the RecF protein is involved in DNA metabolism; it is required for DNA replication and normal SOS inducibility. RecF binds preferentially to single-stranded, linear DNA. It also seems to bind ATP. The sequence is that of DNA replication and repair protein RecF from Bacillus cereus (strain B4264).